A 60-amino-acid polypeptide reads, in one-letter code: Large ribosomal subunit protein uL30 (60 aa).

It belongs to the universal ribosomal protein uL30 family. As to quaternary structure, part of the 50S ribosomal subunit.

This chain is Large ribosomal subunit protein uL30, found in Bacillus cereus (strain G9842).